A 1007-amino-acid chain; its full sequence is Kinesin-like protein KIN-7D, chloroplastic (1007 aa).

Residues 1–53 constitute a chloroplast transit peptide; sequence MATRPASRQRRASSAAAAVAVVRSSPQPQQQQQQQLPIPQSGSPTSTTTTTTS. A compositionally biased stretch (low complexity) spans 1–55; that stretch reads MATRPASRQRRASSAAAAVAVVRSSPQPQQQQQQQLPIPQSGSPTSTTTTTTSSS. The segment at 1–79 is disordered; the sequence is MATRPASRQR…LFAGLDEDPA (79 aa). In terms of domain architecture, Kinesin motor spans 83 to 402; sequence NVTVTVRFRP…LKFAHRAKRI (320 aa). 163 to 170 is an ATP binding site; sequence GVTSSGKT. A coiled-coil region spans residues 403–495; it reads EVQASQNKII…QRLTKLILVS (93 aa). A disordered region spans residues 579–607; sequence ILTSSEGDKSSLTKSTAPSTPIGESVNFP. Coiled coils occupy residues 687–716, 754–791, and 836–907; these read NNEK…ERQI, AADN…TLQA, and SVEI…SVRS. The segment at 901 to 941 is disordered; that stretch reads ELASVRSPTPRRANSGLRGTRRDSISRRHEPAPRRDNNAGY. Positions 920-941 are enriched in basic and acidic residues; it reads TRRDSISRRHEPAPRRDNNAGY. Residues 942-982 adopt a coiled-coil conformation; sequence EREKALEAVLMEKEQKEAELQRRIEESKQKEAFLESELANM.

This sequence belongs to the TRAFAC class myosin-kinesin ATPase superfamily. Kinesin family. KIN-7 subfamily. In terms of assembly, binds microtubules. Homodimer. Mg(2+) serves as cofactor.

It localises to the plastid. The protein resides in the chloroplast. Functionally, probable minus end-directed motor protein with a microtubule-enhanced ATPase activity. Binds ATP/ADP in vitro. Retains total enzymatic activity even after the removal of the ADP bound in the active site. The sequence is that of Kinesin-like protein KIN-7D, chloroplastic from Oryza sativa subsp. japonica (Rice).